A 116-amino-acid polypeptide reads, in one-letter code: Large ribosomal subunit protein uL18 (116 aa).

This sequence belongs to the universal ribosomal protein uL18 family. In terms of assembly, part of the 50S ribosomal subunit; part of the 5S rRNA/L5/L18/L25 subcomplex. Contacts the 5S and 23S rRNAs.

This is one of the proteins that bind and probably mediate the attachment of the 5S RNA into the large ribosomal subunit, where it forms part of the central protuberance. The polypeptide is Large ribosomal subunit protein uL18 (Exiguobacterium sibiricum (strain DSM 17290 / CCUG 55495 / CIP 109462 / JCM 13490 / 255-15)).